The primary structure comprises 213 residues: Glutathione S-transferase PARB (213 aa).

The region spanning 1-82 is the GST N-terminal domain; it reads MAIKVHGSPM…YIAHVYADNG (82 aa). Glutathione is bound by residues S11, 12–13, 40–41, 53–54, and 66–67; these read TA, HK, QV, and ES. The region spanning 89–213 is the GST C-terminal domain; the sequence is DPKKMPSMSV…WVKGLEKLQK (125 aa).

This sequence belongs to the GST superfamily. Phi family.

It carries out the reaction RX + glutathione = an S-substituted glutathione + a halide anion + H(+). Functionally, conjugation of reduced glutathione to a wide number of exogenous and endogenous hydrophobic electrophiles. The polypeptide is Glutathione S-transferase PARB (Nicotiana tabacum (Common tobacco)).